We begin with the raw amino-acid sequence, 244 residues long: MSDYVIECHNLETAYVGSLNRPILNEISCHIKQGEFVVLLGLNGAGKSTLLRSLVGLVPLVRGEVHINGVAMNSRILPQIRRDVGMLFQGGGLIPQLSAIENVLCGRLGTRTTWQTLFGFPKRDRLLALELLEQLGLRELAYQKTSKLSGGQQQRVAIARALIQSPQILLADEPTTGLDVIATQQVMETLAELHAQQGMTVIAVLHDLGIAARYAQRAIILDAGRIVYEGSCDNLQAQFVVNNQ.

Residues 6-244 form the ABC transporter domain; it reads IECHNLETAY…LQAQFVVNNQ (239 aa). An ATP-binding site is contributed by 41-48; that stretch reads GLNGAGKS.

This sequence belongs to the ABC transporter superfamily. Phosphonates importer (TC 3.A.1.9.1) family. In terms of assembly, the complex is composed of two ATP-binding proteins (PhnC), two transmembrane proteins (PhnE) and a solute-binding protein (PhnD).

The protein localises to the cell inner membrane. It carries out the reaction phosphonate(out) + ATP + H2O = phosphonate(in) + ADP + phosphate + H(+). Functionally, part of the ABC transporter complex PhnCDE involved in phosphonates import. Responsible for energy coupling to the transport system. The polypeptide is Phosphonates import ATP-binding protein PhnC 2 (Nostoc sp. (strain PCC 7120 / SAG 25.82 / UTEX 2576)).